The chain runs to 352 residues: Putative GATA transcription factor 22 (352 aa).

The interval 27–53 is disordered; sequence SLHHHLQQQQQQQQHFHHQASSNPSSL. Residues 33–53 show a composition bias toward low complexity; sequence QQQQQQQQHFHHQASSNPSSL. Positions 112–119 match the Nuclear localization signal motif; the sequence is PKKETRLK. Positions 163-189 are disordered; it reads AIITTSDSSKQHTNNDQSSNLSNSERQ. Positions 165–189 are enriched in polar residues; sequence ITTSDSSKQHTNNDQSSNLSNSERQ. The GATA-type zinc finger occupies 195 to 249; that stretch reads DCVIRICSDCNTTKTPLWRSGPRGPKSLCNACGIRQRKARRAAMATATATAVSGV.

It belongs to the type IV zinc-finger family. Class B subfamily. Forms heterodimers with GATA18. In terms of tissue distribution, expressed predominantly in leaves, and barely in stems, flowers and siliques.

It is found in the nucleus. Transcriptional regulator that specifically binds 5'-GATA-3' or 5'-GAT-3' motifs within gene promoters. Involved in the modulation of chloroplast development, growth and division in a cytokinin-dependent manner. Repressor of the gibberellic acid (GA) signaling pathway that regulates flowering and modulates greening, in a SOC1-dependent manner. Prevents the accumulation of SOC1 during flowering. Promotes chlorophyll biosynthesis throughout the plant, by regulating chlorophyll biosynthetic genes (e.g. HEMA1 and GUN4) and chloroplast localized glutamate synthase (e.g. GLU1). Involved in the regulation of sugar-sensing genes (e.g. HXK1, HXK2, STP13 and PLT6). Regulator of germination, senescence, elongation growth and flowering time. Influences also leaf starch content. The chain is Putative GATA transcription factor 22 from Arabidopsis thaliana (Mouse-ear cress).